We begin with the raw amino-acid sequence, 96 residues long: Small ribosomal subunit protein bS6 (96 aa).

Belongs to the bacterial ribosomal protein bS6 family.

Its function is as follows. Binds together with bS18 to 16S ribosomal RNA. This chain is Small ribosomal subunit protein bS6, found in Beutenbergia cavernae (strain ATCC BAA-8 / DSM 12333 / CCUG 43141 / JCM 11478 / NBRC 16432 / NCIMB 13614 / HKI 0122).